Consider the following 165-residue polypeptide: Keratin-associated protein 5-7 (165 aa).

Tandem repeats lie at residues 35–38 (CCVP), 41–44 (CCKP), 47–50 (CCVP), 116–119 (CCKP), 126–129 (CCKP), 145–148 (CCNP), and 155–158 (CCVP). The interval 35–158 (CCVPVCCCKP…CCSQSSCCVP (124 aa)) is 7 X 4 AA repeats of C-C-X-P.

This sequence belongs to the KRTAP type 5 family. Interacts with hair keratins. In terms of tissue distribution, expressed in hair root but not in skin.

In the hair cortex, hair keratin intermediate filaments are embedded in an interfilamentous matrix, consisting of hair keratin-associated protein (KRTAP), which are essential for the formation of a rigid and resistant hair shaft through their extensive disulfide bond cross-linking with abundant cysteine residues of hair keratins. The matrix proteins include the high-sulfur and high-glycine-tyrosine keratins. In Homo sapiens (Human), this protein is Keratin-associated protein 5-7 (KRTAP5-7).